The chain runs to 153 residues: MVKAVAVLSSSEGVSGTIFFSQEAEGAPTTVTGDLSGLKPGPHGFHVHALGDTTNGCMSTGPHYNPHGKDHGAPDDEHRHAGDLGNVTVGEDGTAKFTIVDKQIPLIGAQSIIGRAVVVHADPDDLGKGGHELSKTTGNAGGRVACGIIGLQG.

H46, H48, and H63 together coordinate Cu cation. A disulfide bridge connects residues C57 and C146. 4 residues coordinate Zn(2+): H63, H71, H80, and D83. H120 lines the Cu cation pocket.

It belongs to the Cu-Zn superoxide dismutase family. In terms of assembly, homodimer. It depends on Cu cation as a cofactor. Zn(2+) is required as a cofactor.

It localises to the cytoplasm. The enzyme catalyses 2 superoxide + 2 H(+) = H2O2 + O2. Its function is as follows. Destroys radicals which are normally produced within the cells and which are toxic to biological systems. The polypeptide is Superoxide dismutase [Cu-Zn] (SODCC) (Solidago canadensis var. scabra (Tall goldenrod)).